The primary structure comprises 150 residues: Endoribonuclease YbeY (150 aa).

The Zn(2+) site is built by His-112, His-116, and His-122.

This sequence belongs to the endoribonuclease YbeY family. Zn(2+) serves as cofactor.

It is found in the cytoplasm. Single strand-specific metallo-endoribonuclease involved in late-stage 70S ribosome quality control and in maturation of the 3' terminus of the 16S rRNA. This is Endoribonuclease YbeY from Bdellovibrio bacteriovorus (strain ATCC 15356 / DSM 50701 / NCIMB 9529 / HD100).